We begin with the raw amino-acid sequence, 620 residues long: Preterminal protein (620 aa).

Positions 356 to 365 (RLPMRRRRRR) match the Nuclear localization signal motif. S545 carries the post-translational modification O-(5'-phospho-DNA)-serine.

The protein belongs to the adenoviridae terminal protein family. In terms of assembly, heterodimer with the polymerase; this heterodimer binds to bp 9 to 18 of the genome. Interacts with host POU2F1; POU2F1 binds to the auxiliary sequences in the inverted terminal repeats and tethers the pTP-POL heterodimer to the origin DNA thereby participating in the assembly of the pre-initiation complex (POL-TP-DBP-NFIA-POU2F1). Post-translationally, preterminal protein is used to replicate viral genome, upon genomic encapsidation it is processed first into iTP and finally into TP by adenovirus protease.

The protein localises to the host nucleus matrix. In terms of biological role, protein covalently bound to the viral DNA that acts as a primer for viral genomic replication by DNA strand displacement. Assembles on the viral origin of replication in an initiation complex with viral polymerase, DBP, host NFIA and host POU2F1/OCT1. During initiation, the polymerase covalently couples the first dCTP with Ser-580 of pTP. The terminal protein stimulates the template activity over 20 fold compared to protein-free templates. Neo-synthesized viral genomes are linked to two preterminal proteins, one for each 5' end. These new genomes are encapsidated in the nucleus, and during capsid maturation by viral protease, preterminal protein is first cleaved into intermediary (iTP), then into mature TP. May play a role in host nuclear matrix localization of genomic DNA. This chain is Preterminal protein, found in Bovine adenovirus 2 (BAdV-2).